A 297-amino-acid polypeptide reads, in one-letter code: Alpha-tubulin N-acetyltransferase 1 (297 aa).

Residues 1-184 (MDFPYDLNAL…NNFVVFAGFF (184 aa)) form the N-acetyltransferase domain. Acetyl-CoA is bound by residues 118–131 (FYVT…GYGS) and 154–163 (SPKFLSFLEK). Positions 226 to 297 (FVRPGGPPHS…SLNRSRLSFH (72 aa)) are disordered. Over residues 230-240 (GGPPHSPPLLP) the composition is skewed to pro residues. Low complexity predominate over residues 241–264 (SSPQSRSLSVGSSPSRAPLRPAAA). Composition is skewed to polar residues over residues 266-278 (VLQQ…SPLN) and 286-297 (TSSLNRSRLSFH).

Belongs to the acetyltransferase ATAT1 family. In terms of assembly, monomer.

It localises to the cytoplasm. Its subcellular location is the membrane. The protein localises to the clathrin-coated pit. The protein resides in the cell junction. It is found in the focal adhesion. It localises to the cell projection. Its subcellular location is the axon. The protein localises to the cytoskeleton. The protein resides in the spindle. It catalyses the reaction L-lysyl-[alpha-tubulin] + acetyl-CoA = N(6)-acetyl-L-lysyl-[alpha-tubulin] + CoA + H(+). Specifically acetylates 'Lys-40' in alpha-tubulin on the lumenal side of microtubules. Promotes microtubule destabilization and accelerates microtubule dynamics; this activity may be independent of acetylation activity. Acetylates alpha-tubulin with a slow enzymatic rate, due to a catalytic site that is not optimized for acetyl transfer. Enters the microtubule through each end and diffuses quickly throughout the lumen of microtubules. Acetylates only long/old microtubules because of its slow acetylation rate since it does not have time to act on dynamically unstable microtubules before the enzyme is released. May be involved in neuron development. Acetylates alpha-tubulin in neurons, but not in cilia. This chain is Alpha-tubulin N-acetyltransferase 1, found in Danio rerio (Zebrafish).